The following is a 405-amino-acid chain: Elongation factor Tu (405 aa).

The region spanning 10-215 is the tr-type G domain; the sequence is KPHVNIGTIG…AVDSYIPTPE (206 aa). The tract at residues 19 to 26 is G1; that stretch reads GHVDHGKT. 19–26 lines the GTP pocket; the sequence is GHVDHGKT. Threonine 26 is a Mg(2+) binding site. Residues 61–65 are G2; the sequence is GITIN. Residues 82-85 are G3; sequence DCPG. Residues 82–86 and 137–140 contribute to the GTP site; these read DCPGH and NKVD. The tract at residues 137–140 is G4; sequence NKVD. A G5 region spans residues 175-177; that stretch reads SAL.

It belongs to the TRAFAC class translation factor GTPase superfamily. Classic translation factor GTPase family. EF-Tu/EF-1A subfamily. As to quaternary structure, monomer.

The protein resides in the cytoplasm. The enzyme catalyses GTP + H2O = GDP + phosphate + H(+). Its function is as follows. GTP hydrolase that promotes the GTP-dependent binding of aminoacyl-tRNA to the A-site of ribosomes during protein biosynthesis. The sequence is that of Elongation factor Tu from Deinococcus radiodurans (strain ATCC 13939 / DSM 20539 / JCM 16871 / CCUG 27074 / LMG 4051 / NBRC 15346 / NCIMB 9279 / VKM B-1422 / R1).